The chain runs to 103 residues: Large ribosomal subunit protein bL21 (103 aa).

Belongs to the bacterial ribosomal protein bL21 family. Part of the 50S ribosomal subunit. Contacts protein L20.

Its function is as follows. This protein binds to 23S rRNA in the presence of protein L20. In Polynucleobacter necessarius subsp. necessarius (strain STIR1), this protein is Large ribosomal subunit protein bL21.